We begin with the raw amino-acid sequence, 444 residues long: Protein kinase C and casein kinase substrate in neurons protein 1 (444 aa).

Phosphoserine occurs at positions 2 and 79. The region spanning 13-283 (EETTDSFWEV…AIRGADAQED (271 aa)) is the F-BAR domain. A coiled-coil region spans residues 26 to 275 (KRTVKRIDDG…HVYRELEQAI (250 aa)). Disordered stretches follow at residues 173 to 194 (REMNSKSEQSVTPEQQKKLQDK) and 309 to 386 (LPHT…DDSK). T184 bears the Phosphothreonine mark. The span at 314–324 (TKKEKQPKKAE) shows a compositional bias: basic and acidic residues. Positions 329-351 (TNATGAVESTSQAGDRGSVSSYD) are enriched in polar residues. S346, S348, S349, S361, and S365 each carry phosphoserine. The SH3 domain maps to 385–444 (SKGVRVRALYDYDGQEQDELSFKAGDELTKLGEEDEQGWCRGRLDSGQLGLYPANYVEAI). Y394 carries the post-translational modification Phosphotyrosine. Phosphoserine occurs at positions 405 and 430.

It belongs to the PACSIN family. Homodimer. May form heterooligomers with other PACSINs. Interacts with both COBL and DBNL. Identified in a complex composed of COBL, PACSIN1 and WASL. Interacts (via SH3 domain) with SYNJ1 and WASL. Interacts (via SH3 domain) with DNM1; the interaction is reduced by DNM1 phosphorylation. Interacts with DNM2 and DNM3. Interacts with MAPT. Interacts with EHD1 and EHD3. Interacts with TRPV4. In terms of processing, phosphorylated by casein kinase 2 (CK2) and protein kinase C (PKC).

It localises to the cytoplasm. Its subcellular location is the cell projection. It is found in the synapse. The protein localises to the synaptosome. The protein resides in the ruffle membrane. It localises to the membrane. Its subcellular location is the cytoplasmic vesicle membrane. It is found in the cytosol. The protein localises to the cell membrane. Binds to membranes via its F-BAR domain and mediates membrane tubulation. Plays a role in the reorganization of the microtubule cytoskeleton via its interaction with MAPT; this decreases microtubule stability and inhibits MAPT-induced microtubule polymerization. Plays a role in cellular transport processes by recruiting DNM1, DNM2 and DNM3 to membranes. Plays a role in the reorganization of the actin cytoskeleton and in neuron morphogenesis via its interaction with COBL and WASL, and by recruiting COBL to the cell cortex. Plays a role in the regulation of neurite formation, neurite branching and the regulation of neurite length. Required for normal synaptic vesicle endocytosis; this process retrieves previously released neurotransmitters to accommodate multiple cycles of neurotransmission. Required for normal excitatory and inhibitory synaptic transmission. This is Protein kinase C and casein kinase substrate in neurons protein 1 (Pacsin1) from Pongo abelii (Sumatran orangutan).